The following is a 442-amino-acid chain: Proline--tRNA ligase (442 aa).

It belongs to the class-II aminoacyl-tRNA synthetase family. ProS type 2 subfamily. Homodimer.

It localises to the cytoplasm. The enzyme catalyses tRNA(Pro) + L-proline + ATP = L-prolyl-tRNA(Pro) + AMP + diphosphate. Catalyzes the attachment of proline to tRNA(Pro) in a two-step reaction: proline is first activated by ATP to form Pro-AMP and then transferred to the acceptor end of tRNA(Pro). This chain is Proline--tRNA ligase, found in Mesorhizobium japonicum (strain LMG 29417 / CECT 9101 / MAFF 303099) (Mesorhizobium loti (strain MAFF 303099)).